We begin with the raw amino-acid sequence, 347 residues long: Holliday junction branch migration complex subunit RuvB (347 aa).

The large ATPase domain (RuvB-L) stretch occupies residues 1-181; that stretch reads MTRNSLLNPE…FGIPVRLQFY (181 aa). ATP-binding residues include leucine 20, arginine 21, glycine 62, lysine 65, threonine 66, threonine 67, arginine 171, tyrosine 181, and arginine 218. Threonine 66 contacts Mg(2+). A small ATPAse domain (RuvB-S) region spans residues 182–252; that stretch reads SIEELRQVIT…IADEALNRLE (71 aa). Positions 255 to 347 are head domain (RuvB-H); it reads KLGLDLMDRR…SEIKNQPGLL (93 aa). 3 residues coordinate DNA: arginine 291, arginine 310, and arginine 315.

This sequence belongs to the RuvB family. Homohexamer. Forms an RuvA(8)-RuvB(12)-Holliday junction (HJ) complex. HJ DNA is sandwiched between 2 RuvA tetramers; dsDNA enters through RuvA and exits via RuvB. An RuvB hexamer assembles on each DNA strand where it exits the tetramer. Each RuvB hexamer is contacted by two RuvA subunits (via domain III) on 2 adjacent RuvB subunits; this complex drives branch migration. In the full resolvosome a probable DNA-RuvA(4)-RuvB(12)-RuvC(2) complex forms which resolves the HJ.

It localises to the cytoplasm. It carries out the reaction ATP + H2O = ADP + phosphate + H(+). Functionally, the RuvA-RuvB-RuvC complex processes Holliday junction (HJ) DNA during genetic recombination and DNA repair, while the RuvA-RuvB complex plays an important role in the rescue of blocked DNA replication forks via replication fork reversal (RFR). RuvA specifically binds to HJ cruciform DNA, conferring on it an open structure. The RuvB hexamer acts as an ATP-dependent pump, pulling dsDNA into and through the RuvAB complex. RuvB forms 2 homohexamers on either side of HJ DNA bound by 1 or 2 RuvA tetramers; 4 subunits per hexamer contact DNA at a time. Coordinated motions by a converter formed by DNA-disengaged RuvB subunits stimulates ATP hydrolysis and nucleotide exchange. Immobilization of the converter enables RuvB to convert the ATP-contained energy into a lever motion, pulling 2 nucleotides of DNA out of the RuvA tetramer per ATP hydrolyzed, thus driving DNA branch migration. The RuvB motors rotate together with the DNA substrate, which together with the progressing nucleotide cycle form the mechanistic basis for DNA recombination by continuous HJ branch migration. Branch migration allows RuvC to scan DNA until it finds its consensus sequence, where it cleaves and resolves cruciform DNA. The protein is Holliday junction branch migration complex subunit RuvB of Zymomonas mobilis subsp. mobilis (strain ATCC 31821 / ZM4 / CP4).